Reading from the N-terminus, the 966-residue chain is Receptor protein-tyrosine kinase CEPR1 (966 aa).

Residues 1 to 22 (MRLKNFPFFVLFFFFCFNSNQS) form the signal peptide. Over 23–592 (WGLMSSNQQP…QEPHGKKKLS (570 aa)) the chain is Extracellular. N-linked (GlcNAc...) asparagine glycosylation occurs at Asn61. 20 LRR repeats span residues 70 to 94 (QGLV…VCSY), 95 to 120 (FPNL…TIPN), 122 to 144 (SLLR…FSQM), 145 to 168 (KSLR…IFNL), 170 to 194 (DLEY…VSKL), 195 to 218 (TKLT…IGNL), 219 to 242 (TSLV…IGNL), 245 to 267 (LRQL…IGNL), 268 to 291 (KNLT…ICSL), 292 to 315 (PNLR…LGNS), 317 to 339 (TLKI…LGSS), 341 to 363 (PMIA…VCKS), 365 to 386 (KLLY…TYGS), 387 to 411 (CKTL…VMSL), 412 to 435 (PHVS…IGNA), 437 to 459 (NLSE…LSHS), 460 to 483 (TNLV…VGRL), 484 to 507 (RKLN…LSNL), 508 to 531 (KSLN…LSEL), and 533 to 554 (PTSI…LIRG). 4 N-linked (GlcNAc...) asparagine glycosylation sites follow: Asn109, Asn120, Asn128, and Asn167. Residues Asn217 and Asn241 are each glycosylated (N-linked (GlcNAc...) asparagine). Residues Asn269 and Asn301 are each glycosylated (N-linked (GlcNAc...) asparagine). Residue Asn437 is glycosylated (N-linked (GlcNAc...) asparagine). 2 N-linked (GlcNAc...) asparagine glycosylation sites follow: Asn527 and Asn537. The helical transmembrane segment at 593 to 613 (SIWAILVSVFILVLGVIMFYL) threads the bilayer. At 614–966 (RQRMSKNRAV…VSDHLTQTRL (353 aa)) the chain is on the cytoplasmic side. The Protein kinase domain occupies 656–934 (LVDKNIVGHG…TMNEVVQLLI (279 aa)). Residues 662 to 670 (VGHGGSGTV) and Lys684 contribute to the ATP site. A phosphotyrosine mark is found at Tyr738 and Tyr775. The active-site Proton acceptor is the Asp788. Residues Tyr831 and Tyr838 each carry the phosphotyrosine modification. The interval 937–966 (TPQGGPDMTSKPTTKIKDSIVSDHLTQTRL) is disordered.

It belongs to the protein kinase superfamily. Ser/Thr protein kinase family. As to quaternary structure, interacts with the root-derived peptides CEP1, CEP3 and CEP5. In terms of tissue distribution, expressed in the vasculature, especially in phloem and procambium regions, of stems, leaves, cotyledons, sepals, pedals, pedicels, hypocotyls and roots (in primary and lateral roots, but not in root tips). Expressed in the root from the basal meristem onward. Present in the phloem pole pericycle and in the adjacent phloem.

It is found in the cell membrane. It catalyses the reaction L-tyrosyl-[protein] + ATP = O-phospho-L-tyrosyl-[protein] + ADP + H(+). In terms of biological role, receptor kinase involved in the perception of C-terminally encoded plant signaling peptide (CEP) and subsequent regulation of root and shoot development. Required for xylem and phloem cell files morphology and organization, probably by preventing ectopic lignification in phloem cells. Together with CEPR2, mediates systemic nitrogen (N)-demand signaling upon the perception of root-derived peptides (e.g. CEP1) via the up-regulation of genes involved in N uptake and assimilation pathways. Positively regulates lateral root initiation and development; probably repressed by the signaling peptide CEP5. In Arabidopsis thaliana (Mouse-ear cress), this protein is Receptor protein-tyrosine kinase CEPR1.